Reading from the N-terminus, the 1151-residue chain is Semaphorin-5B (1151 aa).

Residues 1–1036 (MPCGFSPSPV…TDCAGFNLIH (1036 aa)) lie on the Extracellular side of the membrane. Residues 103 to 553 (HPTVAFEDLQ…LRDGVLRVPL (451 aa)) enclose the Sema domain. The N-linked (GlcNAc...) asparagine glycan is linked to N153. Intrachain disulfides connect C172-C182 and C199-C208. 2 N-linked (GlcNAc...) asparagine glycosylation sites follow: N236 and N345. Disulfide bonds link C322–C425 and C346–C388. N436 is a glycosylation site (N-linked (GlcNAc...) asparagine). In terms of domain architecture, PSI spans 555-602 (RCAAYRSQGACLGARDPYCGWDGKQQRCSTLEDSSNMSLWTQNITACP). 2 consecutive TSP type-1 domains span residues 664 to 720 (NGAW…TPCP) and 722 to 771 (PIFW…EGCP). Cystine bridges form between C676-C713, C680-C719, C691-C703, C734-C765, C738-C770, and C749-C755. An O-linked (GalNAc...) threonine glycan is attached at T788. 3 TSP type-1 domains span residues 853–908 (SGGW…QACP), 910–965 (RGAW…QACP), and 966–1010 (EGWS…RPCP). 6 disulfide bridges follow: C865-C902, C869-C907, C880-C892, C922-C959, C926-C964, and C937-C949. The helical; Signal-anchor for type III membrane protein transmembrane segment at 1037-1057 (LVATGISCFLGSGLLTLAVYL) threads the bilayer. Residues 1058–1151 (SCQHCQRQSQ…SPGQRCFPNS (94 aa)) lie on the Cytoplasmic side of the membrane.

It belongs to the semaphorin family.

It is found in the membrane. In terms of biological role, may act as a positive axonal guidance cue. The sequence is that of Semaphorin-5B (SEMA5B) from Homo sapiens (Human).